The primary structure comprises 158 residues: Transcription elongation factor GreA (158 aa).

Residues Ala-45 to Glu-72 adopt a coiled-coil conformation.

The protein belongs to the GreA/GreB family.

Its function is as follows. Necessary for efficient RNA polymerase transcription elongation past template-encoded arresting sites. The arresting sites in DNA have the property of trapping a certain fraction of elongating RNA polymerases that pass through, resulting in locked ternary complexes. Cleavage of the nascent transcript by cleavage factors such as GreA or GreB allows the resumption of elongation from the new 3'terminus. GreA releases sequences of 2 to 3 nucleotides. This is Transcription elongation factor GreA from Xylella fastidiosa (strain M12).